The primary structure comprises 419 residues: Gamma-glutamyl phosphate reductase (419 aa).

Belongs to the gamma-glutamyl phosphate reductase family.

The protein localises to the cytoplasm. It carries out the reaction L-glutamate 5-semialdehyde + phosphate + NADP(+) = L-glutamyl 5-phosphate + NADPH + H(+). It participates in amino-acid biosynthesis; L-proline biosynthesis; L-glutamate 5-semialdehyde from L-glutamate: step 2/2. In terms of biological role, catalyzes the NADPH-dependent reduction of L-glutamate 5-phosphate into L-glutamate 5-semialdehyde and phosphate. The product spontaneously undergoes cyclization to form 1-pyrroline-5-carboxylate. This chain is Gamma-glutamyl phosphate reductase, found in Nitratidesulfovibrio vulgaris (strain DP4) (Desulfovibrio vulgaris).